A 452-amino-acid chain; its full sequence is Septin-10 (452 aa).

The region spanning 36–302 is the Septin-type G domain; it reads QGFCFNILCV…ELYRRCKLQE (267 aa). The interval 46–53 is G1 motif; that stretch reads GETGIGKS. GTP-binding positions include 46–53, G101, 182–190, G236, and R251; these read GETGIGKS and KADTISKSE. A G3 motif region spans residues 98–101; it reads NTVG. Positions 181 to 184 are G4 motif; that stretch reads AKAD. Position 414 is a phosphoserine (S414).

This sequence belongs to the TRAFAC class TrmE-Era-EngA-EngB-Septin-like GTPase superfamily. Septin GTPase family. As to quaternary structure, septins polymerize into heterooligomeric protein complexes that form filaments, and can associate with cellular membranes, actin filaments and microtubules. GTPase activity is required for filament formation. Interacts with ADGB. Proteolytically cleaved in vitro in a calmodulin-dependent manner.

It is found in the cytoplasm. The protein localises to the cytoskeleton. The protein resides in the cell projection. It localises to the cilium. Its subcellular location is the flagellum. Functionally, filament-forming cytoskeletal GTPase. May play a role in cytokinesis (Potential). In Mus musculus (Mouse), this protein is Septin-10.